The following is a 423-amino-acid chain: Diaminobutyrate--2-oxoglutarate transaminase (423 aa).

N6-(pyridoxal phosphate)lysine is present on Lys-271.

It belongs to the class-III pyridoxal-phosphate-dependent aminotransferase family. Pyridoxal 5'-phosphate is required as a cofactor.

The catalysed reaction is L-2,4-diaminobutanoate + 2-oxoglutarate = L-aspartate 4-semialdehyde + L-glutamate. The protein operates within amine and polyamine biosynthesis; ectoine biosynthesis; L-ectoine from L-aspartate 4-semialdehyde: step 1/3. In terms of biological role, catalyzes reversively the conversion of L-aspartate beta-semialdehyde (ASA) to L-2,4-diaminobutyrate (DABA) by transamination with L-glutamate. The protein is Diaminobutyrate--2-oxoglutarate transaminase (ectB) of Streptomyces coelicolor (strain ATCC BAA-471 / A3(2) / M145).